Here is a 578-residue protein sequence, read N- to C-terminus: A-type ATP synthase subunit A (578 aa).

Position 228–235 (228–235 (GPFGSGKT)) interacts with ATP.

Belongs to the ATPase alpha/beta chains family. As to quaternary structure, has multiple subunits with at least A(3), B(3), C, D, E, F, H, I and proteolipid K(x).

The protein localises to the cell membrane. It catalyses the reaction ATP + H2O + 4 H(+)(in) = ADP + phosphate + 5 H(+)(out). Functionally, component of the A-type ATP synthase that produces ATP from ADP in the presence of a proton gradient across the membrane. The A chain is the catalytic subunit. The protein is A-type ATP synthase subunit A of Methanosarcina acetivorans (strain ATCC 35395 / DSM 2834 / JCM 12185 / C2A).